A 335-amino-acid chain; its full sequence is Beta-hexosaminidase (335 aa).

Substrate-binding positions include Asp60, Arg68, Arg133, and 163–164; that span reads KH. Residue His176 is the Proton donor/acceptor of the active site. Asp247 (nucleophile) is an active-site residue.

Belongs to the glycosyl hydrolase 3 family. NagZ subfamily.

It is found in the cytoplasm. The enzyme catalyses Hydrolysis of terminal non-reducing N-acetyl-D-hexosamine residues in N-acetyl-beta-D-hexosaminides.. Its pathway is cell wall biogenesis; peptidoglycan recycling. Functionally, plays a role in peptidoglycan recycling by cleaving the terminal beta-1,4-linked N-acetylglucosamine (GlcNAc) from peptide-linked peptidoglycan fragments, giving rise to free GlcNAc, anhydro-N-acetylmuramic acid and anhydro-N-acetylmuramic acid-linked peptides. This is Beta-hexosaminidase from Xylella fastidiosa (strain M23).